Here is a 155-residue protein sequence, read N- to C-terminus: D-aminoacyl-tRNA deacylase (155 aa).

The Gly-cisPro motif, important for rejection of L-amino acids motif lies at Gly137–Pro138.

The protein belongs to the DTD family. As to quaternary structure, homodimer.

It localises to the cytoplasm. The catalysed reaction is glycyl-tRNA(Ala) + H2O = tRNA(Ala) + glycine + H(+). The enzyme catalyses a D-aminoacyl-tRNA + H2O = a tRNA + a D-alpha-amino acid + H(+). An aminoacyl-tRNA editing enzyme that deacylates mischarged D-aminoacyl-tRNAs. Also deacylates mischarged glycyl-tRNA(Ala), protecting cells against glycine mischarging by AlaRS. Acts via tRNA-based rather than protein-based catalysis; rejects L-amino acids rather than detecting D-amino acids in the active site. By recycling D-aminoacyl-tRNA to D-amino acids and free tRNA molecules, this enzyme counteracts the toxicity associated with the formation of D-aminoacyl-tRNA entities in vivo and helps enforce protein L-homochirality. This chain is D-aminoacyl-tRNA deacylase, found in Roseiflexus sp. (strain RS-1).